Consider the following 471-residue polypeptide: UDP-glycosyltransferase CGT (471 aa).

The active-site Proton acceptor is His-24. Residue His-24 coordinates an anthocyanidin. Catalysis depends on Asp-120, which acts as the Charge relay. Thr-143 provides a ligand contact to UDP-alpha-D-glucose. The interval Ser-280–Arg-281 is UDP. UDP-alpha-D-glucose-binding residues include Val-343, Gln-345, His-360, Trp-363, Asn-364, Ser-365, and Glu-368. An anthocyanidin is bound at residue Gly-383. The UDP-alpha-D-glucose site is built by Asp-384 and Gln-385.

Belongs to the UDP-glycosyltransferase family.

The catalysed reaction is a 3'-hydro-2'-hydroxy-beta-oxodihydrochalcone + UDP-alpha-D-glucose = a 3'-(beta-D-glucopyranosyl)-2'-hydroxy-beta-oxodihydrochalcone + UDP + H(+). In terms of biological role, UDP-glucose-dependent glucosyltransferase catalyzing the c-glucosylation of 2-hydroxyflavanones. This is UDP-glycosyltransferase CGT from Oryza sativa subsp. japonica (Rice).